The chain runs to 169 residues: Chorismate pyruvate-lyase (169 aa).

4 residues coordinate substrate: Met-37, Arg-79, Leu-117, and Glu-158.

Belongs to the UbiC family. In terms of assembly, monomer.

It is found in the cytoplasm. It carries out the reaction chorismate = 4-hydroxybenzoate + pyruvate. Its pathway is cofactor biosynthesis; ubiquinone biosynthesis. Removes the pyruvyl group from chorismate, with concomitant aromatization of the ring, to provide 4-hydroxybenzoate (4HB) for the ubiquinone pathway. This chain is Chorismate pyruvate-lyase, found in Proteus mirabilis (strain HI4320).